We begin with the raw amino-acid sequence, 318 residues long: Beta-sarcoglycan (318 aa).

Residues 1–32 (MAAAAAAAAEQQSSNGPVKKSMREKAVERRNV) are disordered. The Cytoplasmic portion of the chain corresponds to 1 to 65 (MAAAAAAAAE…GLRGRKGNLA (65 aa)). Residues 21 to 32 (SMREKAVERRNV) show a composition bias toward basic and acidic residues. Residues 66 to 86 (ICVIVLLFLLAVINLIITLVI) traverse the membrane as a helical; Signal-anchor for type II membrane protein segment. Residues 87-318 (WAVIRIGPNG…VSDNPCGNTH (232 aa)) lie on the Extracellular side of the membrane. N158, N211, and N258 each carry an N-linked (GlcNAc...) asparagine glycan. Cystine bridges form between C288–C314 and C290–C307.

The protein belongs to the sarcoglycan beta/delta/gamma/zeta family. In terms of assembly, cross-link to form 2 major subcomplexes: one consisting of SGCB, SGCD and SGCG and the other consisting of SGCB and SGCD. The association between SGCB and SGCG is particularly strong while SGCA is loosely associated with the other sarcoglycans. Disulfide bonds are present.

It localises to the cell membrane. The protein localises to the sarcolemma. Its subcellular location is the cytoplasm. It is found in the cytoskeleton. Functionally, component of the sarcoglycan complex, a subcomplex of the dystrophin-glycoprotein complex which forms a link between the F-actin cytoskeleton and the extracellular matrix. In Oryctolagus cuniculus (Rabbit), this protein is Beta-sarcoglycan (SGCB).